The sequence spans 343 residues: S-adenosylmethionine:tRNA ribosyltransferase-isomerase (343 aa).

It belongs to the QueA family. As to quaternary structure, monomer.

The protein localises to the cytoplasm. The catalysed reaction is 7-aminomethyl-7-carbaguanosine(34) in tRNA + S-adenosyl-L-methionine = epoxyqueuosine(34) in tRNA + adenine + L-methionine + 2 H(+). The protein operates within tRNA modification; tRNA-queuosine biosynthesis. In terms of biological role, transfers and isomerizes the ribose moiety from AdoMet to the 7-aminomethyl group of 7-deazaguanine (preQ1-tRNA) to give epoxyqueuosine (oQ-tRNA). This Pelobacter propionicus (strain DSM 2379 / NBRC 103807 / OttBd1) protein is S-adenosylmethionine:tRNA ribosyltransferase-isomerase.